The chain runs to 291 residues: Phosphate import ATP-binding protein PstB (291 aa).

The 244-residue stretch at 43–286 folds into the ABC transporter domain; it reads ANVKDLSFWY…PKHAMTEEYI (244 aa). Residue 75–82 coordinates ATP; that stretch reads GASGCGKS.

The protein belongs to the ABC transporter superfamily. Phosphate importer (TC 3.A.1.7) family. The complex is composed of two ATP-binding proteins (PstB), two transmembrane proteins (PstC and PstA) and a solute-binding protein (PstS).

Its subcellular location is the cell inner membrane. It carries out the reaction phosphate(out) + ATP + H2O = ADP + 2 phosphate(in) + H(+). Functionally, part of the ABC transporter complex PstSACB involved in phosphate import. Responsible for energy coupling to the transport system. The chain is Phosphate import ATP-binding protein PstB from Alcaligenes faecalis.